We begin with the raw amino-acid sequence, 194 residues long: dTTP/UTP pyrophosphatase (194 aa).

Asp73 acts as the Proton acceptor in catalysis.

Belongs to the Maf family. YhdE subfamily. It depends on a divalent metal cation as a cofactor.

It is found in the cytoplasm. It carries out the reaction dTTP + H2O = dTMP + diphosphate + H(+). The catalysed reaction is UTP + H2O = UMP + diphosphate + H(+). Functionally, nucleoside triphosphate pyrophosphatase that hydrolyzes dTTP and UTP. May have a dual role in cell division arrest and in preventing the incorporation of modified nucleotides into cellular nucleic acids. The protein is dTTP/UTP pyrophosphatase of Clostridium botulinum (strain Okra / Type B1).